A 689-amino-acid chain; its full sequence is DNA ligase (689 aa).

Residues Asp-32–Asp-36, Ser-81–Leu-82, and Glu-113 each bind NAD(+). Lys-115 functions as the N6-AMP-lysine intermediate in the catalytic mechanism. NAD(+)-binding residues include Arg-136, Glu-176, Lys-306, and Lys-330. The Zn(2+) site is built by Cys-424, Cys-427, Cys-442, and Cys-448. A BRCT domain is found at Ala-606–Ile-689.

The protein belongs to the NAD-dependent DNA ligase family. LigA subfamily. Mg(2+) serves as cofactor. It depends on Mn(2+) as a cofactor.

The catalysed reaction is NAD(+) + (deoxyribonucleotide)n-3'-hydroxyl + 5'-phospho-(deoxyribonucleotide)m = (deoxyribonucleotide)n+m + AMP + beta-nicotinamide D-nucleotide.. Functionally, DNA ligase that catalyzes the formation of phosphodiester linkages between 5'-phosphoryl and 3'-hydroxyl groups in double-stranded DNA using NAD as a coenzyme and as the energy source for the reaction. It is essential for DNA replication and repair of damaged DNA. The polypeptide is DNA ligase (Colwellia psychrerythraea (strain 34H / ATCC BAA-681) (Vibrio psychroerythus)).